The primary structure comprises 353 residues: Methionine import ATP-binding protein MetN (353 aa).

The 242-residue stretch at 8 to 249 (LDQIDVTFHQ…PKQPLTQDFI (242 aa)) folds into the ABC transporter domain. 42–49 (GYSGAGKS) lines the ATP pocket.

Belongs to the ABC transporter superfamily. Methionine importer (TC 3.A.1.24) family. As to quaternary structure, the complex is composed of two ATP-binding proteins (MetN), two transmembrane proteins (MetI) and a solute-binding protein (MetQ).

The protein resides in the cell membrane. It carries out the reaction L-methionine(out) + ATP + H2O = L-methionine(in) + ADP + phosphate + H(+). It catalyses the reaction D-methionine(out) + ATP + H2O = D-methionine(in) + ADP + phosphate + H(+). Its function is as follows. Part of the ABC transporter complex MetNIQ involved in methionine import. Responsible for energy coupling to the transport system. The chain is Methionine import ATP-binding protein MetN from Streptococcus pneumoniae serotype 4 (strain ATCC BAA-334 / TIGR4).